Consider the following 351-residue polypeptide: MTKKLLVMAGGTGGHVFPAIAVVRELQQQGWEIRWLGTKDRMEADLVPKHGIPIEFIQISGLKGKGIKALLTAPFAILRAVLQAKKIINAYKPDAVLGMGGYVSGPGGIAAKLCGVPVILHEQNAVVGLTNVWLSKIARRTLQAFPTAFPNAEVVGNPVRQDLFEIAPPEQRFAEKGYPINILVMGGSQGALVINKTVLEVAKVLGQNVFISHQVGKGKLAGVEEVYQATGNGIASEFIDDMKAAYEWADLVICRSGALTVCEIAAAGLPAIFVPFQHKDRQQFLNAEYLAQVGAAMIIEQQDFTPESLLKALEPLIADRQKLTEMAIKARAKATPLAAKRVAEVIVENSL.

UDP-N-acetyl-alpha-D-glucosamine is bound by residues 12-14, asparagine 124, arginine 160, serine 188, isoleucine 239, 258-263, and glutamine 283; these read TGG and ALTVCE.

The protein belongs to the glycosyltransferase 28 family. MurG subfamily.

Its subcellular location is the cell inner membrane. It carries out the reaction di-trans,octa-cis-undecaprenyl diphospho-N-acetyl-alpha-D-muramoyl-L-alanyl-D-glutamyl-meso-2,6-diaminopimeloyl-D-alanyl-D-alanine + UDP-N-acetyl-alpha-D-glucosamine = di-trans,octa-cis-undecaprenyl diphospho-[N-acetyl-alpha-D-glucosaminyl-(1-&gt;4)]-N-acetyl-alpha-D-muramoyl-L-alanyl-D-glutamyl-meso-2,6-diaminopimeloyl-D-alanyl-D-alanine + UDP + H(+). Its pathway is cell wall biogenesis; peptidoglycan biosynthesis. Cell wall formation. Catalyzes the transfer of a GlcNAc subunit on undecaprenyl-pyrophosphoryl-MurNAc-pentapeptide (lipid intermediate I) to form undecaprenyl-pyrophosphoryl-MurNAc-(pentapeptide)GlcNAc (lipid intermediate II). This Glaesserella parasuis serovar 5 (strain SH0165) (Haemophilus parasuis) protein is UDP-N-acetylglucosamine--N-acetylmuramyl-(pentapeptide) pyrophosphoryl-undecaprenol N-acetylglucosamine transferase.